Here is a 7182-residue protein sequence, read N- to C-terminus: Replicase polyprotein 1ab (7182 aa).

The 127-residue stretch at 25-151 folds into the CoV Nsp1 globular domain; sequence RTDHVSLKAS…EFQFLLRKKG (127 aa). A BetaCoV Nsp1 C-terminal domain is found at 159–195; the sequence is DAPWDYNWTPYSDLMDALEADPCGKYSQSLLKKLVGG. A CoV Nsp2 N-terminal domain is found at 197–473; the sequence is FTPIDQYMCG…WSKVCETANL (277 aa). Positions 340, 343, 359, and 361 each coordinate Zn(2+). Residues 340–361 form a C4 region; it reads CTSCGKGSWLTGNAVQGFACDC. In terms of domain architecture, CoV Nsp2 middle spans 479 to 713; the sequence is QHAINFVNEF…MHILSKAMQL (235 aa). Residues 715–851 form the CoV Nsp2 C-terminal domain; the sequence is HTTVSWAGSK…VPTLFRLKGG (137 aa). In terms of domain architecture, Ubiquitin-like 1 spans 855 to 964; that stretch reads KGVKFGGEQT…MTFSVNPVEE (110 aa). 2 Macro domains span residues 1186–1345 and 1354–1480; these read PLKN…KVYN and TGLT…AVQT. The DPUP domain occupies 1480–1553; that stretch reads TPEQSFINTV…LEKCRTYLTS (74 aa). Residues 1558–1613 enclose the Ubiquitin-like 2 domain; the sequence is QKNVDVLVTIDGVNFRTVVLNNTTTYRVQLGSVFYKGSDISDTIPTEKMSGEAVYL. The Peptidase C16 domain maps to 1628–1902; the sequence is VYGTADTAFL…WADVDPDLSA (275 aa). Residue Cys-1668 is the For PL-PRO activity of the active site. The Zn(2+) site is built by Cys-1748, Cys-1751, Cys-1783, and Cys-1785. The C4-type zinc finger occupies 1748–1785; the sequence is CNVCGVQDTTTTGLKACIYVGMNSLDELHATHEECCQC. Catalysis depends on for PL-PRO activity residues His-1838 and Asp-1853. One can recognise a Nucleic acid-binding domain in the interval 1916 to 2033; it reads VIEYSPATIL…QVYDIAPVTL (118 aa). Residues 2059–2179 enclose the G2M domain; that stretch reads PQSPVQVAED…ASVTVNVTTA (121 aa). The next 3 membrane-spanning stretches (helical) occupy residues 2158–2178, 2196–2216, and 2268–2288; these read ILLGASSLFAQFASVTVNVTT, GIIGQGFALLKMLLILPFTFW, and LLFLICTTGLLLSSLYYLFLF. The tract at residues 2158 to 2441 is HD1; that stretch reads ILLGASSLFA…VTHIPLLGLV (284 aa). The 3Ecto domain maps to 2305–2371; it reads LATYRELRSY…FQMIQTHVTS (67 aa). 2 cysteine pairs are disulfide-bonded: Cys-2321-Cys-2349 and Cys-2339-Cys-2346. A run of 3 helical transmembrane segments spans residues 2372-2392, 2396-2416, and 2421-2441; these read YVINIDWVWFVMEFALAYVLY, FNVLLLVVSSQYFFSYTGAFV, and YNYLVSGYFFCVTHIPLLGLV. The tract at residues 2455–2545 is Y1; the sequence is RFYNHVINGC…SLRRLVKPTD (91 aa). Residues 2455-2828 form the CoV Nsp3 Y domain; the sequence is RFYNHVINGC…LSVKFSATKL (374 aa). Zn(2+)-binding residues include His-2459, Cys-2464, Cys-2469, Cys-2472, Cys-2505, His-2508, Cys-2512, and Cys-2515. Positions 2459-2472 are ZF1; the sequence is HVINGCKDTACLLC. Residues 2505–2515 form a ZF2 region; that stretch reads CCRHNWNCVDC. Residues 2546-2644 form a Y2 region; the sequence is KSHYYVESVT…LVDSNMVTTV (99 aa). A coV-Y region spans residues 2546–2828; that stretch reads KSHYYVESVT…LSVKFSATKL (283 aa). Residues 2645–2727 are Y3; that stretch reads GDSREIASKM…DALQYAYKHD (83 aa). Residues 2728–2828 are Y4; it reads LQLTTEGFNN…LSVKFSATKL (101 aa). A run of 4 helical transmembrane segments spans residues 2848-2868, 3119-3139, 3152-3172, and 3203-3223; these read CVVTLVVFAMAVLSYLCLPAF, STSLALGVMLCIFLTIAFYYV, CAVVAVAAALLNSLCLCFVVS, and WFVMFGTVVPIWMVFAYIVGV. The HD2 stretch occupies residues 2848-3223; it reads CVVTLVVFAM…WMVFAYIVGV (376 aa). The Nsp4C domain maps to 3242-3338; that stretch reads VFTDGKLNCS…NCSVTSSVLQ (97 aa). The Peptidase C30 domain maps to 3339-3644; that stretch reads SGLVKMAAPS…NMQVMGVVMQ (306 aa). Catalysis depends on for 3CL-PRO activity residues His-3379 and Cys-3486. The next 7 membrane-spanning stretches (helical) occupy residues 3650–3670, 3684–3704, 3709–3729, 3760–3777, 3782–3802, 3823–3843, and 3855–3875; these read ISYGLVHWLFTTLLLAYVATL, VIPLQLTPLVLCVMACVMLTV, TFLTLFLLPTAICLTYANIVY, LGVYLSLCFALAVVVRRL, ASNLALALGSAMVWFYTYTTG, VTVFLAVNVAKFFARVVFLYA, and LVLLMYLAVGYFCTVYFGVFS. The tract at residues 3650 to 3875 is HD3; the sequence is ISYGLVHWLF…FCTVYFGVFS (226 aa). One can recognise a RdRp Nsp7 cofactor domain in the interval 3937–4019; the sequence is SKLTDLKCTS…DLLDHPSVLQ (83 aa). The RdRp Nsp8 cofactor domain maps to 4020–4218; that stretch reads ATLSEFSHLA…RAASSAVTLQ (199 aa). One can recognise a Nsp9 ssRNA-binding domain in the interval 4219–4328; it reads NNEIRPSGLK…GHIAATVRLQ (110 aa). Residues 4329-4467 enclose the ExoN/MTase coactivator domain; sequence AGSNTEFAIN…DALRGTTIPQ (139 aa). The Zn(2+) site is built by Cys-4402, Cys-4405, His-4411, Cys-4418, Cys-4444, Cys-4447, Cys-4455, and Cys-4457. 2 zinc fingers span residues 4402–4418 and 4444–4457; these read CLYCRAHIEHPDVTGVC and CNVCQFWIGHGCNC. In terms of domain architecture, NiRAN spans 4473 to 4730; sequence FLNRVRGSIV…AAETHRDCDL (258 aa). Residues Asn-4678 and Asp-4687 each coordinate Mn(2+). Residues 4735-4833 enclose the Nsp12 Interface domain; it reads IEWPLLEYDY…MNMDVSLHRH (99 aa). The Zn(2+) site is built by His-4764, Cys-4770, Cys-4775, Cys-4779, and Cys-4956. Positions 4834 to 5401 constitute a Nsp12 RNA-dependent RNA polymerase domain; that stretch reads RLSLKELMMY…DLYTAPTTLQ (568 aa). The segment at 4836–5050 is rdRp Fingers N-ter; it reads SLKELMMYAA…HQKMLKSMAA (215 aa). Residues 5051 to 5089 are rdRp Palm N-ter; the sequence is TRGSTCVIGTTKFYGGWDFMLKTLYKDVDNPHLMGWDYP. In terms of domain architecture, RdRp catalytic spans 5081–5243; the sequence is PHLMGWDYPK…CYNSDYATKG (163 aa). The interval 5090 to 5148 is rdRp Fingers C-ter; the sequence is KCDRAMPNMCRIFASLILARKHSTCCTNTDRFYRLANECAQVLSEYVLCGGGYYVKPGG. Positions 5111, 5114, and 5115 each coordinate Zn(2+). Positions 5149–5284 are rdRp Palm C-ter; the sequence is TSSGDATTAY…KKGPHEFCSQ (136 aa). Active-site residues include Ser-5228, Asp-5229, and Asp-5230. The rdRp Thumb stretch occupies residues 5285-5401; the sequence is HTLFIKDGDD…DLYTAPTTLQ (117 aa). The CV ZBD domain maps to 5402 to 5514; the sequence is AVGSCVVCHS…TEFNRLATCD (113 aa). Zn(2+) is bound by residues Cys-5406, Cys-5409, Cys-5417, Cys-5420, Cys-5427, Cys-5430, His-5434, His-5440, Cys-5451, Cys-5456, Cys-5473, and His-5476. A (+)RNA virus helicase ATP-binding domain is found at 5658–5839; sequence TVPEEFANHV…MCNLGPDIFL (182 aa). 5683 to 5690 contacts ATP; the sequence is GPPGTGKS. Positions 5840 to 6014 constitute a (+)RNA virus helicase C-terminal domain; it reads SVCYRCPEEI…GLYKDCSRES (175 aa). Positions 6071–6286 constitute an ExoN domain; that stretch reads LFITRDEAIR…RCLAIHDCFI (216 aa). Catalysis depends on residues Asp-6089, Glu-6091, and Glu-6190. Cys-6206, Cys-6209, Cys-6225, His-6228, His-6256, Cys-6260, and His-6263 together coordinate Zn(2+). Catalysis depends on residues His-6267 and Asp-6272. Residue Cys-6278 coordinates Zn(2+). The 229-residue stretch at 6295–6523 folds into the N7-MTase domain; sequence YPYISHEKRL…NLWSTFTKIQ (229 aa). S-adenosyl-L-methionine is bound at residue 6330 to 6336; it reads DIGNPKG. The segment at 6409–6423 is gpppA-binding; it reads CDGGSLYVNKHAFHT. Cys-6447, Cys-6469, Cys-6480, and His-6483 together coordinate Zn(2+). The Nsp15 N-terminal oligomerization domain maps to 6524–6584; the sequence is GLENIAYNVI…NIAFELYAKR (61 aa). Positions 6585–6715 constitute an AV-Nsp11N/CoV-Nsp15M domain; it reads AVRSHPDFNL…IYKKVNNEFV (131 aa). The region spanning 6732–6871 is the NendoU domain; it reads TPVSEMEKDF…KDGQVQTFYP (140 aa). Active-site residues include His-6762, His-6777, Lys-6817, Lys-6920, Asp-7004, Lys-7044, and Glu-7077. The Nidovirus-type SAM-dependent 2'-O-MTase domain occupies 6876–7170; that stretch reads INDWKPGLAM…TLSVSTDVLV (295 aa).

The protein belongs to the coronaviruses polyprotein 1ab family. In terms of assembly, interacts with host PHB and PHB2. Interacts with papain-like protease nsp3 and non-structural protein 6. As to quaternary structure, monomer. Homodimer. Only the homodimer shows catalytic activity. In terms of assembly, interacts with nsp8 and nsp12 to form the replication-transcription complex (RTC): nsp12, nsp7, two subunits of nsp8, and up to two subunits of nsp13. Interacts with nsp7, nsp13 and nsp12 to form the replication-transcription complex (RTC): nsp12, nsp7, two subunits of nsp8, and up to two subunits of nsp13. As to quaternary structure, interacts with nsp12. In terms of assembly, interacts with proofreading exoribonuclease nsp14 and 2'-O-methyltransferase nsp16; these interactions enhance nsp14 and nsp16 enzymatic activities. Interacts with nsp7 and nsp8 to form the replication-transcription complex (RTC): nsp12, nsp7, two subunits of nsp8, and up to two subunits of nsp13. Interacts with nsp9. As to quaternary structure, interacts with nsp8 to form the replication-transcription complex (RTC): nsp12, nsp7, two subunits of nsp8, and up to two subunits of nsp13. Mn(2+) is required as a cofactor. The cofactor is Mg(2+). In terms of processing, specific enzymatic cleavages in vivo by its own proteases yield mature proteins. 3CL-PRO and PL-PRO proteinases are autocatalytically processed.

It localises to the host membrane. The protein resides in the host cytoplasm. It is found in the host perinuclear region. The protein localises to the host endoplasmic reticulum-Golgi intermediate compartment. The catalysed reaction is RNA(n) + a ribonucleoside 5'-triphosphate = RNA(n+1) + diphosphate. The enzyme catalyses ATP + H2O = ADP + phosphate + H(+). It carries out the reaction Thiol-dependent hydrolysis of ester, thioester, amide, peptide and isopeptide bonds formed by the C-terminal Gly of ubiquitin (a 76-residue protein attached to proteins as an intracellular targeting signal).. It catalyses the reaction a 5'-end (N(7)-methyl 5'-triphosphoguanosine)-ribonucleoside in mRNA + S-adenosyl-L-methionine = a 5'-end (N(7)-methyl 5'-triphosphoguanosine)-(2'-O-methyl-ribonucleoside) in mRNA + S-adenosyl-L-homocysteine + H(+). The catalysed reaction is uridylyl-uridylyl-ribonucleotide-RNA = a 3'-end uridylyl-2',3'-cyclophospho-uridine-RNA + a 5'-end dephospho-ribonucleoside-RNA. The enzyme catalyses a 5'-end diphospho-ribonucleoside in mRNA + GTP + H(+) = a 5'-end (5'-triphosphoguanosine)-ribonucleoside in mRNA + diphosphate. It carries out the reaction a 5'-end (5'-triphosphoguanosine)-ribonucleoside in mRNA + S-adenosyl-L-methionine = a 5'-end (N(7)-methyl 5'-triphosphoguanosine)-ribonucleoside in mRNA + S-adenosyl-L-homocysteine. Its function is as follows. The replicase polyprotein of coronaviruses is a multifunctional protein: it contains the activities necessary for the transcription of negative stranded RNA, leader RNA, subgenomic mRNAs and progeny virion RNA as well as proteinases responsible for the cleavage of the polyprotein into functional products. Inhibits host translation by interacting with the 40S ribosomal subunit. The nsp1-40S ribosome complex further induces an endonucleolytic cleavage near the 5'UTR of host mRNAs, targeting them for degradation. Viral mRNAs are not susceptible to nsp1-mediated endonucleolytic RNA cleavage thanks to the presence of a 5'-end leader sequence and are therefore protected from degradation. By suppressing host gene expression, nsp1 facilitates efficient viral gene expression in infected cells and evasion from host immune response. Functionally, may play a role in the modulation of host cell survival signaling pathway by interacting with host PHB and PHB2. Indeed, these two proteins play a role in maintaining the functional integrity of the mitochondria and protecting cells from various stresses. In terms of biological role, responsible for the cleavages located at the N-terminus of the replicase polyprotein. In addition, PL-PRO possesses a deubiquitinating/deISGylating activity and processes both 'Lys-48'- and 'Lys-63'-linked polyubiquitin chains from cellular substrates. Participates together with nsp4 in the assembly of virally-induced cytoplasmic double-membrane vesicles necessary for viral replication. Antagonizes innate immune induction of type I interferon by blocking the phosphorylation, dimerization and subsequent nuclear translocation of host IRF3. Also prevents host NF-kappa-B signaling. Its function is as follows. Participates in the assembly of virally-induced cytoplasmic double-membrane vesicles necessary for viral replication. Cleaves the C-terminus of replicase polyprotein at 11 sites. Recognizes substrates containing the core sequence [ILMVF]-Q-|-[SGACN]. Also able to bind an ADP-ribose-1''-phosphate (ADRP). Functionally, plays a role in the initial induction of autophagosomes from host endoplasmic reticulum. Later, limits the expansion of these phagosomes that are no longer able to deliver viral components to lysosomes. In terms of biological role, forms a hexadecamer with nsp8 (8 subunits of each) that may participate in viral replication by acting as a primase. Alternatively, may synthesize substantially longer products than oligonucleotide primers. Its function is as follows. Forms a hexadecamer with nsp7 (8 subunits of each) that may participate in viral replication by acting as a primase. Alternatively, may synthesize substantially longer products than oligonucleotide primers. Forms a primer, NSP9-pU, which is utilized by the polymerase for the initiation of RNA chains. Interacts with ribosome signal recognition particle RNA (SRP). Together with NSP8, suppress protein integration into the cell membrane, thereby disrupting host immune defenses. Functionally, plays a pivotal role in viral transcription by stimulating both nsp14 3'-5' exoribonuclease and nsp16 2'-O-methyltransferase activities. Therefore plays an essential role in viral mRNAs cap methylation. In terms of biological role, RNA-directed RNA polymerase that catalyzes the transcription of viral genomic and subgenomic RNAs. Acts in complex with nsp7 and nsp8 to transcribe both the minus and positive strands of genomic RNA. The kinase-like NiRAN domain of NSP12 attaches one or more nucleotides to the amino terminus of NSP9, forming a covalent RNA-protein intermediate that serves as transcription/replication primer. Subgenomic RNAs (sgRNAs) are formed by discontinuous transcription: The polymerase has the ability to pause at transcription-regulating sequences (TRS) and jump to the leader TRS, resulting in a major deletion. This creates a series of subgenomic RNAs that are replicated, transcribed and translated. In addition, Nsp12 is a subunit of the viral RNA capping enzyme that catalyzes the RNA guanylyltransferase reaction for genomic and sub-genomic RNAs. Subsequently, the NiRAN domain transfers RNA to GDP, and forms the core cap structure GpppA-RNA. Its function is as follows. Multi-functional protein with a zinc-binding domain in N-terminus displaying RNA and DNA duplex-unwinding activities with 5' to 3' polarity. Activity of helicase is dependent on magnesium. Plays a role in viral RNA synthesis through two distinct activities. The N7-guanine methyltransferase activity plays a role in the formation of the cap structure GpppA-RNA. The proofreading exoribonuclease reduces the sensitivity of the virus to RNA mutagens during replication. This activity acts on both ssRNA and dsRNA in a 3'-5' direction. Functionally, plays a role in viral transcription/replication and prevents the simultaneous activation of host cell dsRNA sensors, such as MDA5/IFIH1, OAS, and PKR. Acts by degrading the 5'-polyuridines generated during replication of the poly(A) region of viral genomic and subgenomic RNAs. Catalyzes a two-step reaction in which a 2'3'-cyclic phosphate (2'3'-cP) is first generated by 2'-O transesterification, which is then hydrolyzed to a 3'-phosphate (3'-P). If not degraded, poly(U) RNA would hybridize with poly(A) RNA tails and activate host dsRNA sensors. In terms of biological role, methyltransferase that mediates mRNA cap 2'-O-ribose methylation to the 5'-cap structure of viral mRNAs. N7-methyl guanosine cap is a prerequisite for binding of nsp16. Therefore plays an essential role in viral mRNAs cap methylation which is essential to evade immune system. This chain is Replicase polyprotein 1ab (rep), found in Pipistrellus abramus (Japanese pipistrelle).